A 534-amino-acid polypeptide reads, in one-letter code: Serine/threonine-protein kinase ppk15 (534 aa).

The tract at residues 1–40 (MDSDSPILPLSNNPPAARTHDHSQRNNHARHVSSSGTTLF) is disordered. 3 positions are modified to phosphoserine: Ser-33, Ser-56, and Ser-60. A disordered region spans residues 85-104 (FSSEQNPRRPLTKPSEGVHN). A Protein kinase domain is found at 130 to 458 (YLILDTLGHG…PDQAKNHPFI (329 aa)). ATP contacts are provided by residues 136–144 (LGHGTFGQV) and Lys-159. The active-site Proton acceptor is Asp-257. Tyr-291 is modified (phosphotyrosine).

This sequence belongs to the protein kinase superfamily. Ser/Thr protein kinase family.

The protein localises to the cytoplasm. Its subcellular location is the cytoskeleton. The protein resides in the microtubule organizing center. It localises to the spindle pole body. The catalysed reaction is L-seryl-[protein] + ATP = O-phospho-L-seryl-[protein] + ADP + H(+). It catalyses the reaction L-threonyl-[protein] + ATP = O-phospho-L-threonyl-[protein] + ADP + H(+). The chain is Serine/threonine-protein kinase ppk15 (ppk15) from Schizosaccharomyces pombe (strain 972 / ATCC 24843) (Fission yeast).